The following is a 95-amino-acid chain: Co-chaperonin GroES (95 aa).

Belongs to the GroES chaperonin family. In terms of assembly, heptamer of 7 subunits arranged in a ring. Interacts with the chaperonin GroEL.

The protein localises to the cytoplasm. Together with the chaperonin GroEL, plays an essential role in assisting protein folding. The GroEL-GroES system forms a nano-cage that allows encapsulation of the non-native substrate proteins and provides a physical environment optimized to promote and accelerate protein folding. GroES binds to the apical surface of the GroEL ring, thereby capping the opening of the GroEL channel. This is Co-chaperonin GroES from Desulforapulum autotrophicum (strain ATCC 43914 / DSM 3382 / VKM B-1955 / HRM2) (Desulfobacterium autotrophicum).